Consider the following 267-residue polypeptide: NAD(P)H-hydrate epimerase (267 aa).

The YjeF N-terminal domain occupies 27 to 242 (AQKIDEDLMS…DLEAKFDLQL (216 aa)). A (6S)-NADPHX-binding site is contributed by 78–82 (NQGGD). K(+) is bound by residues glutamine 79 and aspartate 142. Residues 146–152 (GFNFKGD) and aspartate 185 each bind (6S)-NADPHX. Serine 188 provides a ligand contact to K(+).

It belongs to the NnrE/AIBP family. The cofactor is K(+).

The protein localises to the cytoplasm. It is found in the mitochondrion. It catalyses the reaction (6R)-NADHX = (6S)-NADHX. It carries out the reaction (6R)-NADPHX = (6S)-NADPHX. In terms of biological role, catalyzes the epimerization of the S- and R-forms of NAD(P)HX, a damaged form of NAD(P)H that is a result of enzymatic or heat-dependent hydration. This is a prerequisite for the S-specific NAD(P)H-hydrate dehydratase to allow the repair of both epimers of NAD(P)HX. The sequence is that of NAD(P)H-hydrate epimerase from Mycosarcoma maydis (Corn smut fungus).